Here is a 243-residue protein sequence, read N- to C-terminus: MARKGPKRHLKRLAAPSSWYIERKAYKWAVRPRPGPHNMRTSIPLLYIVRDYLGYAKTAREARKILNEGKFLVDGKVRKDYKFPVGIMDVVSIPETGEHYRVLPNRIGKLVLHPISEEEANIKPLRIRNKRMVKGAKVQLNFHDGTNHLIPLTEKDNYFTSYTVLMKVPEREIMEVLPFEKGAYVFVTQGKNVARKGRIVEIKKFPMGWPDVVTIEDEEGELFDTLKEYAFVVGKDKPKISLP.

The region spanning 43–105 (IPLLYIVRDY…TGEHYRVLPN (63 aa)) is the S4 RNA-binding domain.

Belongs to the eukaryotic ribosomal protein eS4 family.

This chain is Small ribosomal subunit protein eS4 (rps4e), found in Pyrococcus horikoshii (strain ATCC 700860 / DSM 12428 / JCM 9974 / NBRC 100139 / OT-3).